The following is a 340-amino-acid chain: Putative UPF0607 protein ENSP00000332738 (340 aa).

A compositionally biased stretch (basic and acidic residues) spans 75–90 (VRAEEPKEATEVKDQV). Disordered stretches follow at residues 75-130 (VRAE…NPRP) and 215-281 (GLLM…KLPC). Residues 91-126 (ETQGQEDNKTGPCSNGKAASTSRPLETQGNLTSSWY) are compositionally biased toward polar residues. A compositionally biased stretch (low complexity) spans 228-241 (PAALRSSRSSPPRA). Residues 242–251 (AGHRPRKRKL) show a composition bias toward basic residues. Low complexity predominate over residues 254 to 266 (PPLQLQQTPPLQL).

This sequence belongs to the UPF0607 family.

This is Putative UPF0607 protein ENSP00000332738 from Homo sapiens (Human).